A 172-amino-acid chain; its full sequence is Crossover junction endodeoxyribonuclease RuvC (172 aa).

Residues Asp11, Glu70, and Asp142 contribute to the active site. Mg(2+) contacts are provided by Asp11, Glu70, and Asp142.

This sequence belongs to the RuvC family. Homodimer which binds Holliday junction (HJ) DNA. The HJ becomes 2-fold symmetrical on binding to RuvC with unstacked arms; it has a different conformation from HJ DNA in complex with RuvA. In the full resolvosome a probable DNA-RuvA(4)-RuvB(12)-RuvC(2) complex forms which resolves the HJ. Mg(2+) serves as cofactor.

The protein localises to the cytoplasm. The catalysed reaction is Endonucleolytic cleavage at a junction such as a reciprocal single-stranded crossover between two homologous DNA duplexes (Holliday junction).. Its function is as follows. The RuvA-RuvB-RuvC complex processes Holliday junction (HJ) DNA during genetic recombination and DNA repair. Endonuclease that resolves HJ intermediates. Cleaves cruciform DNA by making single-stranded nicks across the HJ at symmetrical positions within the homologous arms, yielding a 5'-phosphate and a 3'-hydroxyl group; requires a central core of homology in the junction. The consensus cleavage sequence is 5'-(A/T)TT(C/G)-3'. Cleavage occurs on the 3'-side of the TT dinucleotide at the point of strand exchange. HJ branch migration catalyzed by RuvA-RuvB allows RuvC to scan DNA until it finds its consensus sequence, where it cleaves and resolves the cruciform DNA. This is Crossover junction endodeoxyribonuclease RuvC from Hydrogenovibrio crunogenus (strain DSM 25203 / XCL-2) (Thiomicrospira crunogena).